The primary structure comprises 113 residues: UPF0321 protein C569.02c (113 aa).

An N-terminal signal peptide occupies residues 1-17 (MLLLFCICCAFIKLVLA). Residues Asn20, Asn39, and Asn65 are each glycosylated (N-linked (GlcNAc...) asparagine).

It belongs to the UPF0321 family.

In Schizosaccharomyces pombe (strain 972 / ATCC 24843) (Fission yeast), this protein is UPF0321 protein C569.02c.